The chain runs to 240 residues: 3-dehydroquinate dehydratase (240 aa).

3-dehydroquinate is bound by residues Ser-15, 42–44, and Arg-73; that span reads EWR. Residue His-132 is the Proton donor/acceptor of the active site. Lys-160 acts as the Schiff-base intermediate with substrate in catalysis. Residues Arg-202, Ser-221, and Gln-225 each contribute to the 3-dehydroquinate site.

The protein belongs to the type-I 3-dehydroquinase family. Homodimer.

It catalyses the reaction 3-dehydroquinate = 3-dehydroshikimate + H2O. It participates in metabolic intermediate biosynthesis; chorismate biosynthesis; chorismate from D-erythrose 4-phosphate and phosphoenolpyruvate: step 3/7. Functionally, involved in the third step of the chorismate pathway, which leads to the biosynthesis of aromatic amino acids. Catalyzes the cis-dehydration of 3-dehydroquinate (DHQ) and introduces the first double bond of the aromatic ring to yield 3-dehydroshikimate. The polypeptide is 3-dehydroquinate dehydratase (Latilactobacillus sakei subsp. sakei (strain 23K) (Lactobacillus sakei subsp. sakei)).